A 345-amino-acid polypeptide reads, in one-letter code: uncharacterized protein (345 aa).

PDZ GRASP-type domains lie at 27 to 112 (CGFR…WASI) and 118 to 207 (AIWH…HGVL). The segment at 27–223 (CGFRVLKVEN…LSGPPPQPGD (197 aa)) is GRASP. A disordered region spans residues 229–345 (PMLGGPDHKV…APQNEELVKN (117 aa)). Basic and acidic residues predominate over residues 297–308 (KLSRELDHKTKD). Composition is skewed to polar residues over residues 309–318 (ASSTNDSQTT) and 328–338 (VNSTNDESAPQ).

The protein localises to the golgi apparatus membrane. This is an uncharacterized protein from Schizosaccharomyces pombe (strain 972 / ATCC 24843) (Fission yeast).